The primary structure comprises 435 residues: D-inositol 3-phosphate glycosyltransferase (435 aa).

Position 25 (His25) interacts with 1D-myo-inositol 3-phosphate. Residues 31–32 and Gly39 each bind UDP-N-acetyl-alpha-D-glucosamine; that span reads QP. 1D-myo-inositol 3-phosphate contacts are provided by residues 36-41, Lys94, Tyr127, Thr151, and Arg171; that span reads DAGGMN. UDP-N-acetyl-alpha-D-glucosamine-binding residues include Arg245 and Lys250. Residues Tyr320, Arg321, and Ala323 each coordinate Mg(2+). Residues Glu333 and Glu341 each contribute to the UDP-N-acetyl-alpha-D-glucosamine site. Thr347 contributes to the Mg(2+) binding site.

This sequence belongs to the glycosyltransferase group 1 family. MshA subfamily. Homodimer.

The enzyme catalyses 1D-myo-inositol 3-phosphate + UDP-N-acetyl-alpha-D-glucosamine = 1D-myo-inositol 2-acetamido-2-deoxy-alpha-D-glucopyranoside 3-phosphate + UDP + H(+). Catalyzes the transfer of a N-acetyl-glucosamine moiety to 1D-myo-inositol 3-phosphate to produce 1D-myo-inositol 2-acetamido-2-deoxy-glucopyranoside 3-phosphate in the mycothiol biosynthesis pathway. The chain is D-inositol 3-phosphate glycosyltransferase from Streptosporangium roseum (strain ATCC 12428 / DSM 43021 / JCM 3005 / KCTC 9067 / NCIMB 10171 / NRRL 2505 / NI 9100).